The sequence spans 1653 residues: Protein TOPAZ1 (1653 aa).

3 disordered regions span residues 1 to 94 (MRPP…TDLV), 284 to 303 (YSVE…KSGK), and 415 to 442 (ISST…SETE). Positions 63 to 78 (GREETEGDKLAKENGK) are enriched in basic and acidic residues. The span at 423-442 (SDGHHMEKRSPRGDLRSETE) shows a compositional bias: basic and acidic residues.

Restricted to testis, where it localizes to germ cells.

It is found in the cytoplasm. It localises to the cytosol. Its function is as follows. Important for normal spermatogenesis and male fertility. Specifically required for progression to the post-meiotic stages of spermatocyte development. Seems to be necessary for normal expression levels of a number of testis-expressed gene transcripts, although its role in this process is unclear. The protein is Protein TOPAZ1 of Mus musculus (Mouse).